Here is a 449-residue protein sequence, read N- to C-terminus: uncharacterized protein (449 aa).

Residue Ser-420 is modified to Phosphoserine.

This sequence belongs to the NAD kinase family.

Its subcellular location is the cytoplasm. The protein resides in the nucleus. This is an uncharacterized protein from Schizosaccharomyces pombe (strain 972 / ATCC 24843) (Fission yeast).